The primary structure comprises 142 residues: UPF0306 protein Ent638_3591 (142 aa).

The protein belongs to the UPF0306 family.

This is UPF0306 protein Ent638_3591 from Enterobacter sp. (strain 638).